The chain runs to 52 residues: MLTWSIIFLVVAIIAGLLGFGGIAGTATGIAKILFALFLILFVVSLLFGRTG.

Helical transmembrane passes span Trp-4–Ala-24 and Gly-29–Gly-49.

This sequence belongs to the UPF0391 family.

Its subcellular location is the cell membrane. The protein is UPF0391 membrane protein Avin_10980 of Azotobacter vinelandii (strain DJ / ATCC BAA-1303).